The chain runs to 160 residues: MTNIRIGQGYDVHQLTEGRKLILGGVEIPFEKGLLGHSDADALLHAVTDALLGAAGLGDIGSHFPDTAAEFKDADSRVLLRAAYQSVQAQGWQVVNVDTTVIAQKPKLAPHIPQMRANIAADLGIDISCVNIKGKTNEKLGYLGRMEGIEAQAAVLLVRI.

Residues Asp11 and His13 each coordinate a divalent metal cation. 4-CDP-2-C-methyl-D-erythritol 2-phosphate is bound by residues 11-13 and 37-38; these read DVH and HS. An a divalent metal cation-binding site is contributed by His45. 4-CDP-2-C-methyl-D-erythritol 2-phosphate is bound by residues 59–61 and Arg145; that span reads DIG.

Belongs to the IspF family. As to quaternary structure, homotrimer. It depends on a divalent metal cation as a cofactor.

The catalysed reaction is 4-CDP-2-C-methyl-D-erythritol 2-phosphate = 2-C-methyl-D-erythritol 2,4-cyclic diphosphate + CMP. Its pathway is isoprenoid biosynthesis; isopentenyl diphosphate biosynthesis via DXP pathway; isopentenyl diphosphate from 1-deoxy-D-xylulose 5-phosphate: step 4/6. Its function is as follows. Involved in the biosynthesis of isopentenyl diphosphate (IPP) and dimethylallyl diphosphate (DMAPP), two major building blocks of isoprenoid compounds. Catalyzes the conversion of 4-diphosphocytidyl-2-C-methyl-D-erythritol 2-phosphate (CDP-ME2P) to 2-C-methyl-D-erythritol 2,4-cyclodiphosphate (ME-CPP) with a corresponding release of cytidine 5-monophosphate (CMP). This Neisseria gonorrhoeae (strain ATCC 700825 / FA 1090) protein is 2-C-methyl-D-erythritol 2,4-cyclodiphosphate synthase.